The primary structure comprises 145 residues: uncharacterized protein (145 aa).

Belongs to the asfivirus K145R family.

The protein localises to the virion. This is an uncharacterized protein from African swine fever virus (isolate Pig/Kenya/KEN-50/1950) (ASFV).